The following is a 230-amino-acid chain: Prolactin-6A1 (230 aa).

A signal peptide spans methionine 1–proline 29. Residue asparagine 57 is glycosylated (N-linked (GlcNAc...) asparagine). Cystine bridges form between cysteine 89–cysteine 205 and cysteine 222–cysteine 230.

This sequence belongs to the somatotropin/prolactin family. As to expression, expressed in both placenta and decidual tissues. Detected first in deciduals cells early in gestation and in trophoblasts later in pregnancy.

The protein localises to the secreted. This chain is Prolactin-6A1 (Prl6a1), found in Mus musculus (Mouse).